The sequence spans 73 residues: Beta-1 adrenergic receptor (73 aa).

The chain crosses the membrane as a helical span at residues 1 to 12 (ISALVSFLPILM). Residues 13 to 38 (HWWRAENDEARRCYNDPKCCDFVTNR) lie on the Extracellular side of the membrane. A disulfide bridge connects residues Cys25 and Cys31. The chain crosses the membrane as a helical span at residues 39-64 (AYAIASSVVSFYVPLCIMAFVYLRVF). Position 44 (Ser44) interacts with cyanopindolol. Residues 65–73 (REAQKQVKK) are Cytoplasmic-facing.

The protein belongs to the G-protein coupled receptor 1 family. Adrenergic receptor subfamily. ADRB1 sub-subfamily. As to quaternary structure, interacts (via C-terminus PDZ motif) with RAPGEF2; the interaction is direct. Interacts with GOPC, MAGI3 and DLG4. Homologous desensitization of the receptor is mediated by its phosphorylation by beta-adrenergic receptor kinase.

It is found in the cell membrane. Its subcellular location is the early endosome. Functionally, beta-adrenergic receptors mediate the catecholamine-induced activation of adenylate cyclase through the action of G proteins. This receptor binds epinephrine and norepinephrine with approximately equal affinity. Mediates Ras activation through G(s)-alpha- and cAMP-mediated signaling. In dorsal pons neurons, involved in the regulation of sleep/wake behaviors. The protein is Beta-1 adrenergic receptor (ADRB1) of Meriones unguiculatus (Mongolian jird).